The following is a 285-amino-acid chain: MPTLTPPAGSEVIPFASVHTERVEDCLVFPSELSTKVRLGGLVTAVSGGILGAALLSQTSSQGVAVPALLMGLSFVGGLLSTWSPCGYSSLCLLRPVGPYSARSLVKYTPTFLLHGIGYAVGALILGCVLGIAGGLLGFGGVSFGALAGLGAAGIIYGAHQLGFLRVPYPQRRAQVPHDARQRFPVWFIGGLYGLSLGLNYLTYVQTPILYLVTAAAVLSSNIGAAILLFAAFNAGRFLPMAVNYLPVSDITVQNWLARRQEGAALLDGVLLVAGGAALLTFAAL.

A run of 7 helical transmembrane segments spans residues 39-59, 63-83, 120-140, 144-164, 184-204, 209-229, and 265-285; these read LGGLVTAVSGGILGAALLSQT, GVAVPALLMGLSFVGGLLSTW, AVGALILGCVLGIAGGLLGFG, FGALAGLGAAGIIYGAHQLGF, FPVWFIGGLYGLSLGLNYLTY, ILYLVTAAAVLSSNIGAAILL, and ALLDGVLLVAGGAALLTFAAL.

It is found in the cell membrane. It functions in the pathway one-carbon metabolism; methylamine degradation. This chain is Methylamine utilization protein MauF (mauF), found in Methylorubrum extorquens (strain ATCC 14718 / DSM 1338 / JCM 2805 / NCIMB 9133 / AM1) (Methylobacterium extorquens).